Consider the following 110-residue polypeptide: MEVAAKLSGARISAQKARLVADQIRGKKVGEALNLLAFSSKKAAEILKKVLESAVANAEHNEGADVDDLKVSTVFVNEGRSLKRIMPRAKGRADRIVKRSCHITVKVADK.

This sequence belongs to the universal ribosomal protein uL22 family. As to quaternary structure, part of the 50S ribosomal subunit.

This protein binds specifically to 23S rRNA; its binding is stimulated by other ribosomal proteins, e.g. L4, L17, and L20. It is important during the early stages of 50S assembly. It makes multiple contacts with different domains of the 23S rRNA in the assembled 50S subunit and ribosome. Its function is as follows. The globular domain of the protein is located near the polypeptide exit tunnel on the outside of the subunit, while an extended beta-hairpin is found that lines the wall of the exit tunnel in the center of the 70S ribosome. The chain is Large ribosomal subunit protein uL22 from Pseudomonas savastanoi pv. phaseolicola (strain 1448A / Race 6) (Pseudomonas syringae pv. phaseolicola (strain 1448A / Race 6)).